A 188-amino-acid polypeptide reads, in one-letter code: Elongation factor P (188 aa).

This sequence belongs to the elongation factor P family.

It localises to the cytoplasm. It participates in protein biosynthesis; polypeptide chain elongation. In terms of biological role, involved in peptide bond synthesis. Stimulates efficient translation and peptide-bond synthesis on native or reconstituted 70S ribosomes in vitro. Probably functions indirectly by altering the affinity of the ribosome for aminoacyl-tRNA, thus increasing their reactivity as acceptors for peptidyl transferase. The polypeptide is Elongation factor P (Rhodopseudomonas palustris (strain HaA2)).